A 219-amino-acid polypeptide reads, in one-letter code: Pyridoxine/pyridoxamine 5'-phosphate oxidase (219 aa).

The tract at residues 1 to 23 is disordered; it reads MTSSVIPPSPSAADYAAEGDRPL. FMN-binding positions include 66 to 71, 81 to 82, Lys88, and Gln110; these read RIVLLK and FT. Lys71 contributes to the substrate binding site. Substrate contacts are provided by Tyr128, Arg132, and Ser136. FMN is bound by residues 145–146 and Trp191; that span reads QS. Residue 197 to 199 coordinates substrate; sequence RMH. Arg201 lines the FMN pocket.

This sequence belongs to the pyridoxamine 5'-phosphate oxidase family. Homodimer. Requires FMN as cofactor.

It catalyses the reaction pyridoxamine 5'-phosphate + O2 + H2O = pyridoxal 5'-phosphate + H2O2 + NH4(+). The catalysed reaction is pyridoxine 5'-phosphate + O2 = pyridoxal 5'-phosphate + H2O2. Its pathway is cofactor metabolism; pyridoxal 5'-phosphate salvage; pyridoxal 5'-phosphate from pyridoxamine 5'-phosphate: step 1/1. The protein operates within cofactor metabolism; pyridoxal 5'-phosphate salvage; pyridoxal 5'-phosphate from pyridoxine 5'-phosphate: step 1/1. In terms of biological role, catalyzes the oxidation of either pyridoxine 5'-phosphate (PNP) or pyridoxamine 5'-phosphate (PMP) into pyridoxal 5'-phosphate (PLP). The sequence is that of Pyridoxine/pyridoxamine 5'-phosphate oxidase from Hyphomonas neptunium (strain ATCC 15444).